The chain runs to 80 residues: Cell division activator CedA (80 aa).

Belongs to the CedA family.

Activates the cell division inhibited by chromosomal DNA over-replication. The sequence is that of Cell division activator CedA from Escherichia coli O139:H28 (strain E24377A / ETEC).